The sequence spans 148 residues: SUMO-conjugating enzyme UBC9 (148 aa).

The UBC core domain maps to 1 to 147 (MASKRILKEL…ARTWTQKYAM (147 aa)). Catalysis depends on C85, which acts as the Glycyl thioester intermediate.

This sequence belongs to the ubiquitin-conjugating enzyme family. In terms of assembly, interacts with CHIP. In terms of tissue distribution, highest expression in young stems and old leaves. Lowest levels in floral buds, anthers and young leaves.

Its pathway is protein modification; protein sumoylation. Functionally, accepts the ubiquitin-like protein SUMO/SMT3 from the E1 complex and catalyzes its covalent attachment to other proteins. Mediates the selective degradation of short-lived and abnormal proteins. In Arabidopsis thaliana (Mouse-ear cress), this protein is SUMO-conjugating enzyme UBC9 (UBC9).